Reading from the N-terminus, the 865-residue chain is FO synthase (865 aa).

A disordered region spans residues 1–21 (MIEGVTELATPNVPPAPPSPS). 2 consecutive Radical SAM core domains span residues 76-320 (ITYS…LGPD) and 544-785 (VTYV…DNIQ). Residues 77-409 (TYSRNVFIPL…PRIGAHVAAL (333 aa)) form a cofG-like region. The [4Fe-4S] cluster site is built by Cys90, Cys94, Cys97, Cys558, Cys562, and Cys565. The segment at 521–854 (DGAELDAVAA…RERTTVYGRV (334 aa)) is cofH-like.

This sequence in the N-terminal section; belongs to the radical SAM superfamily. CofG family. In the C-terminal section; belongs to the radical SAM superfamily. CofH family. [4Fe-4S] cluster is required as a cofactor.

It carries out the reaction 5-amino-6-(D-ribitylamino)uracil + L-tyrosine + S-adenosyl-L-methionine = 5-amino-5-(4-hydroxybenzyl)-6-(D-ribitylimino)-5,6-dihydrouracil + 2-iminoacetate + 5'-deoxyadenosine + L-methionine + H(+). It catalyses the reaction 5-amino-5-(4-hydroxybenzyl)-6-(D-ribitylimino)-5,6-dihydrouracil + S-adenosyl-L-methionine = 7,8-didemethyl-8-hydroxy-5-deazariboflavin + 5'-deoxyadenosine + L-methionine + NH4(+) + H(+). It functions in the pathway cofactor biosynthesis; coenzyme F0 biosynthesis. Its function is as follows. Catalyzes the radical-mediated synthesis of 7,8-didemethyl-8-hydroxy-5-deazariboflavin (FO) from 5-amino-6-(D-ribitylamino)uracil and L-tyrosine. The sequence is that of FO synthase (fbiC) from Nocardia farcinica (strain IFM 10152).